Here is a 287-residue protein sequence, read N- to C-terminus: Proteasome subunit alpha (287 aa).

The segment at Gly241–Thr287 is disordered. Residues Ala262–Gly275 are compositionally biased toward low complexity. Gly residues predominate over residues Gly276–Thr287.

Belongs to the peptidase T1A family. The 20S proteasome core is composed of 14 alpha and 14 beta subunits that assemble into four stacked heptameric rings, resulting in a barrel-shaped structure. The two inner rings, each composed of seven catalytic beta subunits, are sandwiched by two outer rings, each composed of seven alpha subunits. The catalytic chamber with the active sites is on the inside of the barrel. Has a gated structure, the ends of the cylinder being occluded by the N-termini of the alpha-subunits. Is capped by the proteasome-associated ATPase, ARC.

The protein localises to the cytoplasm. It participates in protein degradation; proteasomal Pup-dependent pathway. With respect to regulation, the formation of the proteasomal ATPase ARC-20S proteasome complex, likely via the docking of the C-termini of ARC into the intersubunit pockets in the alpha-rings, may trigger opening of the gate for substrate entry. Interconversion between the open-gate and close-gate conformations leads to a dynamic regulation of the 20S proteasome proteolysis activity. In terms of biological role, component of the proteasome core, a large protease complex with broad specificity involved in protein degradation. This Geodermatophilus obscurus (strain ATCC 25078 / DSM 43160 / JCM 3152 / CCUG 61914 / KCC A-0152 / KCTC 9177 / NBRC 13315 / NRRL B-3577 / G-20) protein is Proteasome subunit alpha.